A 295-amino-acid polypeptide reads, in one-letter code: (R)-3-hydroxydecanoyl-ACP:CoA transacylase (295 aa).

The 227-residue stretch at Asn28–Asp254 folds into the AB hydrolase-1 domain.

It functions in the pathway polyester biosynthesis; polyhydroxyalkanoate biosynthesis. Catalyzes the transfer of the acyl moiety from in vitro synthesized 3-hydroxydecanoyl-CoA to acyl carrier protein. This is (R)-3-hydroxydecanoyl-ACP:CoA transacylase (phaG) from Ectopseudomonas oleovorans (Pseudomonas oleovorans).